We begin with the raw amino-acid sequence, 177 residues long: O-acetyl-ADP-ribose deacetylase (177 aa).

Residues 1–175 (MKTRIHVVQG…LYERLLTQQG (175 aa)) form the Macro domain. Substrate contacts are provided by residues 11 to 12 (DI), Asn-25, 33 to 35 (GVD), and 122 to 126 (STGVY). The active-site Proton acceptor is the Asp-35.

Belongs to the MacroD-type family. YmdB subfamily. Homodimer. Interacts with RNase III.

The catalysed reaction is 3''-O-acetyl-ADP-D-ribose + H2O = ADP-D-ribose + acetate + H(+). It catalyses the reaction 2''-O-acetyl-ADP-D-ribose + H2O = ADP-D-ribose + acetate + H(+). Its function is as follows. Deacetylates O-acetyl-ADP ribose to yield ADP-ribose and free acetate. Down-regulates ribonuclease 3 (RNase III) activity. Acts by interacting directly with the region of the ribonuclease that is required for dimerization/activation. This is O-acetyl-ADP-ribose deacetylase from Escherichia coli O157:H7.